Here is a 932-residue protein sequence, read N- to C-terminus: Adhesion G protein-coupled receptor E2 (932 aa).

The first 15 residues, 1-15, serve as a signal peptide directing secretion; the sequence is MWGFWLLLFWGFSGT. Residues 16–652 are Extracellular-facing; the sequence is HRWGMTTLAI…TMEFSLYIIS (637 aa). EGF-like domains are found at residues 32 to 69 and 81 to 119; these read GVNE…SNGQ and DVNE…SAGG. 11 cysteine pairs are disulfide-bonded: C36-C48, C42-C57, C85-C98, C92-C107, C137-C149, C143-C158, C160-C171, C177-C189, C183-C198, C226-C239, and C233-C248. The 40-residue stretch at 133-172 folds into the EGF-like 3; calcium-binding domain; sequence DVDECLTIGICPKNSNCSNSVGSYSCTCQSGFVSNGSTCE. 2 N-linked (GlcNAc...) asparagine glycosylation sites follow: N148 and N167. An EGF-like 4; calcium-binding domain is found at 173–210; it reads DEDECVTRNACPEHATCHNTLGSYYCTCNEGLEFSGGG. The EGF-like 5; calcium-binding domain maps to 222 to 260; the sequence is DVDECSRNSTLCGPSFICINTLGSYSCSCPAGFSLSTFQ. N-linked (GlcNAc...) asparagine glycosylation occurs at N229. 10 N-linked (GlcNAc...) asparagine glycosylation sites follow: N269, N283, N309, N333, N344, N363, N405, N417, N474, and N499. Residues 272–307 enclose the EGF-like 6; calcium-binding domain; it reads DIDECDDICPSNSSCTNTLGSYFCTCHPGFASSNGQ. 2 disulfide bridges follow: C276–C286 and C280–C295. The EGF-like 7; calcium-binding domain occupies 319 to 354; sequence DIDECTQDPFRCGRNSSCTNVPGSYNCSCLPDFRMD. Cystine bridges form between C323/C336 and C330/C345. The GAIN-B domain occupies 482–643; it reads EYLEIESKVI…AIIMASGELT (162 aa). The short motif at 507 to 509 is the Cell attachment site element; it reads RGD. 2 disulfides stabilise this stretch: C596/C625 and C613/C627. The interval 596 to 643 is GPS; the sequence is CVSWNTDVEDGRWTPSGCETVEASETHTVCSCNRMTNLAIIMASGELT. A helical membrane pass occupies residues 653-673; the sequence is YVGTVISLVCLALAIATFLLF. At 674 to 681 the chain is on the cytoplasmic side; the sequence is RAVQNHNT. A helical membrane pass occupies residues 682–702; the sequence is YLHLHLCVCLFLAKILFLTGI. Residues 703 to 719 are Extracellular-facing; it reads DKTDNQTACAIIAGFLH. The N-linked (GlcNAc...) asparagine glycan is linked to N707. The chain crosses the membrane as a helical span at residues 720–740; it reads YLFLACFFWMLVEAVMLFLMV. The Cytoplasmic segment spans residues 741–756; it reads RNLKVVNYFSSRNIKM. A helical transmembrane segment spans residues 757–777; sequence LHLCAFGYGLPVVVVIISATV. At 778 to 795 the chain is on the extracellular side; sequence HPWGYGMHNRCWLNTETG. Residues 796 to 816 form a helical membrane-spanning segment; that stretch reads FIWSFLGPVCMIITINSALLA. Topologically, residues 817–849 are cytoplasmic; that stretch reads WTLWVLRQKLCSVNSEVSKLKDTRLLTFKAIAQ. A helical membrane pass occupies residues 850-870; it reads IFILGCSWVLGIFQIGPLASI. Topologically, residues 871 to 872 are extracellular; the sequence is MA. The chain crosses the membrane as a helical span at residues 873–893; it reads YLFTTINSLQGAFIFLIHCLL. The Cytoplasmic segment spans residues 894 to 932; that stretch reads NRQVRDEYRKLLTRKTDLSSHSQTSGILLSSMPSTSKTG.

The protein belongs to the G-protein coupled receptor 2 family. Adhesion G-protein coupled receptor (ADGR) subfamily.

It is found in the cell membrane. Its function is as follows. Orphan receptor involved in cell adhesion and probably in cell-cell interactions involved specifically cells of the immune system. May play a role in regulatory T-cells (Treg) development. This is Adhesion G protein-coupled receptor E2 (Adgre1) from Rattus norvegicus (Rat).